Consider the following 397-residue polypeptide: Elongation factor Tu (397 aa).

The 197-residue stretch at 10 to 206 folds into the tr-type G domain; it reads KPHVNIGTIG…AVDDNVPEPE (197 aa). Positions 19–26 are G1; the sequence is GHVDHGKT. 19–26 provides a ligand contact to GTP; it reads GHVDHGKT. Position 26 (Thr26) interacts with Mg(2+). The G2 stretch occupies residues 62-66; the sequence is GITIN. The tract at residues 83-86 is G3; the sequence is DAPG. Residues 83–87 and 138–141 each bind GTP; these read DAPGH and NKSD. The segment at 138–141 is G4; sequence NKSD. Residues 176–178 are G5; that stretch reads SAL.

It belongs to the TRAFAC class translation factor GTPase superfamily. Classic translation factor GTPase family. EF-Tu/EF-1A subfamily. As to quaternary structure, monomer.

The protein localises to the cytoplasm. The enzyme catalyses GTP + H2O = GDP + phosphate + H(+). Its function is as follows. GTP hydrolase that promotes the GTP-dependent binding of aminoacyl-tRNA to the A-site of ribosomes during protein biosynthesis. This chain is Elongation factor Tu, found in Brevibacterium linens.